We begin with the raw amino-acid sequence, 170 residues long: Ribosome maturation factor RimM (170 aa).

The 74-residue stretch at 97–170 (HPDEYYWVDL…RIVVDWDPEF (74 aa)) folds into the PRC barrel domain.

The protein belongs to the RimM family. Binds ribosomal protein uS19.

The protein resides in the cytoplasm. Its function is as follows. An accessory protein needed during the final step in the assembly of 30S ribosomal subunit, possibly for assembly of the head region. Essential for efficient processing of 16S rRNA. May be needed both before and after RbfA during the maturation of 16S rRNA. It has affinity for free ribosomal 30S subunits but not for 70S ribosomes. The polypeptide is Ribosome maturation factor RimM (Xylella fastidiosa (strain M12)).